Reading from the N-terminus, the 347-residue chain is 5-deoxyribose 1-phosphate isomerase (347 aa).

Substrate-binding positions include 48 to 50 (RGA), Arg-91, and Gln-198. The active-site Proton donor is the Asp-239. 249–250 (NK) contacts substrate.

The protein belongs to the EIF-2B alpha/beta/delta subunits family. DrdI subfamily.

The catalysed reaction is 5-deoxy-alpha-D-ribose 1-phosphate = 5-deoxy-D-ribulose 1-phosphate. The protein operates within carbohydrate degradation. Its function is as follows. Catalyzes the isomerization of 5-deoxy-alpha-D-ribose 1-phosphate to 5-deoxy-D-ribulose 1-phosphate, as part of a 5-deoxyribose salvage pathway that recycles this toxic radical SAM enzyme by-product to mainstream metabolites. In Bacillus cereus (strain ATCC 14579 / DSM 31 / CCUG 7414 / JCM 2152 / NBRC 15305 / NCIMB 9373 / NCTC 2599 / NRRL B-3711), this protein is 5-deoxyribose 1-phosphate isomerase.